Consider the following 94-residue polypeptide: Neurotoxin 213 (94 aa).

The first 22 residues, 1–22 (MLKFILTCTSVILFTAVEDSSC), serve as a signal peptide directing secretion. The LCN-type CS-alpha/beta domain maps to 24–88 (KGGNYPISVY…YWDYHRNNCK (65 aa)). Cystine bridges form between cysteine 39/cysteine 62, cysteine 48/cysteine 67, and cysteine 52/cysteine 69.

It belongs to the long (3 C-C) scorpion toxin superfamily. As to expression, expressed by the venom gland.

Its subcellular location is the secreted. In Lychas mucronatus (Chinese swimming scorpion), this protein is Neurotoxin 213.